A 630-amino-acid polypeptide reads, in one-letter code: ATP-dependent zinc metalloprotease FtsH 2 (630 aa).

Over 1–8 (MNNNPNRR) the chain is Cytoplasmic. A helical transmembrane segment spans residues 9–29 (GSLIGPLFIYFILAMLIFMSI). Residues 30 to 110 (SQLNTSNITE…YIQNTGASWW (81 aa)) lie on the Periplasmic side of the membrane. A helical transmembrane segment spans residues 111-131 (VTMLIYMLPLIILMFFWFWMF). Residues 132–630 (RRSGTGEGIP…KETNLFVSYA (499 aa)) are Cytoplasmic-facing. 203–210 (GPPGTGKT) serves as a coordination point for ATP. Position 425 (His425) interacts with Zn(2+). Glu426 is an active-site residue. His429 and Asp502 together coordinate Zn(2+).

In the central section; belongs to the AAA ATPase family. It in the C-terminal section; belongs to the peptidase M41 family. Homohexamer. Requires Zn(2+) as cofactor.

It localises to the cell inner membrane. Acts as a processive, ATP-dependent zinc metallopeptidase for both cytoplasmic and membrane proteins. Plays a role in the quality control of integral membrane proteins. The protein is ATP-dependent zinc metalloprotease FtsH 2 of Petrotoga mobilis (strain DSM 10674 / SJ95).